The chain runs to 216 residues: Urease accessory protein UreG (216 aa).

25–32 (GPVGSGKT) is a binding site for GTP.

Belongs to the SIMIBI class G3E GTPase family. UreG subfamily. In terms of assembly, homodimer. UreD, UreF and UreG form a complex that acts as a GTP-hydrolysis-dependent molecular chaperone, activating the urease apoprotein by helping to assemble the nickel containing metallocenter of UreC. The UreE protein probably delivers the nickel.

The protein resides in the cytoplasm. Its function is as follows. Facilitates the functional incorporation of the urease nickel metallocenter. This process requires GTP hydrolysis, probably effectuated by UreG. This is Urease accessory protein UreG from Burkholderia pseudomallei (strain 1710b).